The following is an 818-amino-acid chain: Dipeptidyl-peptidase 7 (818 aa).

A signal peptide spans 1–22; sequence MKLKRILLSVALLCGIGTTAMA. Residues histidine 87, aspartate 223, and serine 645 each act as charge relay system in the active site.

This sequence belongs to the peptidase S46 family.

Catalyzes the removal of dipeptides from the N-terminus of oligopeptides. Most efficiently cleaves the synthetic substrate Met-Leu-methylcoumaryl-7-amide (Met-Leu-MCA), and slowly hydrolyzes Leu-Gln-, Lys-Ala-, Leu-Arg, and Ala-Asn-MCA. Is likely involved in amino acid metabolism and bacterial growth/survival of asaccharolytic P.endodontalis, that utilizes amino acids from extracellular proteinaceous nutrients as energy and carbon sources. This is Dipeptidyl-peptidase 7 from Porphyromonas endodontalis (strain ATCC 35406 / DSM 24491 / JCM 8526 / CCUG 16442 / BCRC 14492 / NCTC 13058 / HG 370) (Bacteroides endodontalis).